The following is a 182-amino-acid chain: MKLAEAESKMQHTVEATQRAFNTIRTGRANASLLDKVLVDYYGSPTPLKSLANISTPDATTILIQPYDKSSLNIVEKAISLSDVGLTPSNDGAVIRLNIPPLTSDRRKELVKIAAKYAEEGRVAIRNIRRDAVDSIRKLEKNAEVSEDEAKDQQDKLQKLTNKYTARIDELLVEKEKDISTV.

The protein belongs to the RRF family.

It is found in the cytoplasm. Its function is as follows. Responsible for the release of ribosomes from messenger RNA at the termination of protein biosynthesis. May increase the efficiency of translation by recycling ribosomes from one round of translation to another. This Nostoc sp. (strain PCC 7120 / SAG 25.82 / UTEX 2576) protein is Ribosome-recycling factor.